A 263-amino-acid polypeptide reads, in one-letter code: Cobalt-precorrin-6A reductase (263 aa).

It belongs to the precorrin-6x reductase family.

It catalyses the reaction Co-precorrin-6B + NAD(+) = Co-precorrin-6A + NADH + H(+). Its pathway is cofactor biosynthesis; adenosylcobalamin biosynthesis; cob(II)yrinate a,c-diamide from sirohydrochlorin (anaerobic route): step 7/10. Its function is as follows. Catalyzes the reduction of the macrocycle of cobalt-precorrin-6A to cobalt-precorrin-6B. The chain is Cobalt-precorrin-6A reductase (cbiJ) from Salmonella typhimurium (strain LT2 / SGSC1412 / ATCC 700720).